A 591-amino-acid chain; its full sequence is V-type ATP synthase alpha chain (591 aa).

242-249 contacts ATP; the sequence is GPFGAGKT.

The protein belongs to the ATPase alpha/beta chains family.

It carries out the reaction ATP + H2O + 4 H(+)(in) = ADP + phosphate + 5 H(+)(out). Functionally, produces ATP from ADP in the presence of a proton gradient across the membrane. The V-type alpha chain is a catalytic subunit. This chain is V-type ATP synthase alpha chain (atpA), found in Chlamydia muridarum (strain MoPn / Nigg).